The following is a 746-amino-acid chain: MDFLEEPIPGVGTYDDFNTIDWVREKSRDRDRHREITNRSKESTWALIHSVSDAFSGWLLMLLIGLLSGSLAGLIDISAHWMTDLKEGICTEGFWFNHEHCCWNSQQVTFEDRDKCPEWNSWSQLIINMDEGAFAYIVNYFMYVLWALLFAFLAVSLVKVFAPYACGSGIPEIKTILSGFIIRGYLGKWTLIIKTITLVLAVSSGLSLGKEGPLVHVACCCGNILCHCFNKYRENEAKRREVLSAAAAAGVSVAFGAPIGGVLFSLEEVSYYFPLKTLWRSFFAALVAAFTLRSINPFGNSRLVLFYVEFHTPWHLFELVPFILLGIFGGLWGALFIRTNIAWCRKRKTTQLGKYPVIEVLIVTAITAILAFPNEYTRMSTSELISELFNDCGLLDSSKLCDYKNLSNTSKSGELPDRPAGAGVSSAMWQLALTLILKIVITIFTFGMKIPSGLFIPSMAVGAIAGRLLGVGMEQLAYHHRDWTIFNSWCSQGADCITPGLYAMVGAAACLGGVTRMTVSLVVIMFELTGGLEYIVPLMAAAMTSKWVADALGREGIYDAHIRLNGYPFLEAKEEFAHKTLAMDVMKPRRNDPLLTVLTQDSMTVEDVETIISETTYSGFPVVVSRESQRLVGFVLRRDLIISIENARKEQDGVVSTSIIYFTEHSPPVPPYTAPTLKLRNILDLSPFTVTDLTPMEIVVDIFRKLGLRQCLVTHNGRLLGIITKKDVLKHIAQMANQDPDSILFN.

At 1–54 (MDFLEEPIPGVGTYDDFNTIDWVREKSRDRDRHREITNRSKESTWALIHSVSDA) the chain is on the cytoplasmic side. 2 helical membrane passes run 55–92 (FSGW…ICTE) and 138–161 (VNYF…VKVF). A Selectivity filter part_1 motif is present at residues 167–171 (GSGIP). Ser168 is a binding site for chloride. The segment at residues 170–177 (IPEIKTIL) is an intramembrane region (helical). The next 2 membrane-spanning stretches (helical) occupy residues 186-205 (LGKW…VSSG) and 211-230 (EGPL…HCFN). The Selectivity filter part_2 signature appears at 209–213 (GKEGP). 2 intramembrane regions (helical) span residues 242–254 (VLSA…VSVA) and 258–266 (PIGGVLFSL). Transmembrane regions (helical) follow at residues 278–296 (LWRS…RSIN), 319–344 (LVPF…IAWC), 352–372 (LGKY…ILAF), 428–448 (MWQL…TFGM), and 453–472 (GLFI…LGVG). The Selectivity filter part_3 signature appears at 453 to 457 (GLFIP). Phe455 is a chloride binding site. The helical intramembrane region spans 500–514 (GLYAMVGAAACLGGV). Residues 515–517 (TRM) constitute an intramembrane region (note=Loop between two helices). The segment at residues 518-529 (TVSLVVIMFELT) is an intramembrane region (helical). The segment at residues 530–534 (GGLEY) is an intramembrane region (note=Loop between two helices). The helical transmembrane segment at 535–552 (IVPLMAAAMTSKWVADAL) threads the bilayer. At 553–746 (GREGIYDAHI…NQDPDSILFN (194 aa)) the chain is on the cytoplasmic side. Tyr558 contributes to the chloride binding site. CBS domains follow at residues 586–650 (MKPR…ARKE) and 682–742 (ILDL…DPDS). ATP contacts are provided by residues Thr596, 617 to 619 (YSG), and 724 to 727 (TKKD).

This sequence belongs to the chloride channel (TC 2.A.49) family. ClC-5/CLCN5 subfamily. Interacts with NEDD4 and NEDD4L. Ubiquitinated by NEDD4L in the presence of albumin; which promotes endocytosis and proteasomal degradation. In terms of tissue distribution, detected in duodenum, jejunum and ileum. Detected in crypt and villus regions of the epithelium of the small intestine.

It localises to the golgi apparatus membrane. The protein localises to the endosome membrane. The protein resides in the cell membrane. It carries out the reaction 2 chloride(in) + H(+)(out) = 2 chloride(out) + H(+)(in). In terms of biological role, proton-coupled chloride transporter. Functions as antiport system and exchanges chloride ions against protons. Important for normal acidification of the endosome lumen. May play an important role in renal tubular function. The CLC channel family contains both chloride channels and proton-coupled anion transporters that exchange chloride or another anion for protons. The absence of conserved gating glutamate residues is typical for family members that function as channels. In Cavia porcellus (Guinea pig), this protein is H(+)/Cl(-) exchange transporter 5 (CLCN5).